The sequence spans 260 residues: ATP synthase subunit a (260 aa).

5 consecutive transmembrane segments (helical) span residues 27–47 (FWTV…LFIW), 90–110 (IAPL…MDLI), 132–154 (SADV…YYSI), 208–228 (LIFI…LSVP), and 230–250 (AIFH…LTIV).

The protein belongs to the ATPase A chain family. F-type ATPases have 2 components, CF(1) - the catalytic core - and CF(0) - the membrane proton channel. CF(1) has five subunits: alpha(3), beta(3), gamma(1), delta(1), epsilon(1). CF(0) has three main subunits: a(1), b(2) and c(9-12). The alpha and beta chains form an alternating ring which encloses part of the gamma chain. CF(1) is attached to CF(0) by a central stalk formed by the gamma and epsilon chains, while a peripheral stalk is formed by the delta and b chains.

The protein resides in the cell inner membrane. Functionally, key component of the proton channel; it plays a direct role in the translocation of protons across the membrane. The chain is ATP synthase subunit a from Aeromonas hydrophila subsp. hydrophila (strain ATCC 7966 / DSM 30187 / BCRC 13018 / CCUG 14551 / JCM 1027 / KCTC 2358 / NCIMB 9240 / NCTC 8049).